A 471-amino-acid chain; its full sequence is Tryptophanase (471 aa).

Residues lysine 5, lysine 115, and lysine 156 each carry the N6-acetyllysine modification. Lysine 270 bears the N6-(pyridoxal phosphate)lysine mark. At lysine 450 the chain carries N6-acetyllysine.

This sequence belongs to the beta-eliminating lyase family. In terms of assembly, homotetramer. Requires pyridoxal 5'-phosphate as cofactor.

The enzyme catalyses L-tryptophan + H2O = indole + pyruvate + NH4(+). It participates in amino-acid degradation; L-tryptophan degradation via pyruvate pathway; indole and pyruvate from L-tryptophan: step 1/1. In Escherichia coli O139:H28 (strain E24377A / ETEC), this protein is Tryptophanase.